Here is a 703-residue protein sequence, read N- to C-terminus: Metastasis-associated protein MTA1 (703 aa).

Residues 1-164 (MAANMYRVGD…PQQKTLLADK (164 aa)) enclose the BAH domain. The ELM2 domain maps to 165–276 (GEIRVGNRYQ…KAISALVPQG (112 aa)). Residue Lys-182 forms a Glycyl lysine isopeptide (Lys-Gly) (interchain with G-Cter in ubiquitin) linkage. Residues 283–335 (DEMEEWSASEANLFEEALEKYGKDFTDIQQDFLPWKSLTSIIEYYYMWKTTDR) enclose the SANT domain. A Phosphoserine modification is found at Ser-386. Residues 393–420 (CESCYTTQSYQWYSWGPPNMQCRLCASC) form a GATA-type; atypical zinc finger. Residues 437-460 (DGERPGPNRNNMSPHGIPARSSGS) are disordered. Ser-449 carries the post-translational modification Phosphoserine. Lys-509 is covalently cross-linked (Glycyl lysine isopeptide (Lys-Gly) (interchain with G-Cter in SUMO2 and SUMO3)). The residue at position 522 (Ser-522) is a Phosphoserine. The segment covering 542–552 (ETHPRPPKPDP) has biased composition (basic and acidic residues). The disordered stretch occupies residues 542 to 583 (ETHPRPPKPDPVKSSSSVLSSLTPAKSAPVINNGSPTILGKR). The SH3-binding signature appears at 545 to 552 (PRPPKPDP). Lys-549 is covalently cross-linked (Glycyl lysine isopeptide (Lys-Gly) (interchain with G-Cter in SUMO2)). The span at 553–565 (VKSSSSVLSSLTP) shows a compositional bias: low complexity. Thr-564 carries the post-translational modification Phosphothreonine. Ser-576 carries the post-translational modification Phosphoserine. Residue Thr-578 is modified to Phosphothreonine. The residue at position 614 (Lys-614) is an N6-acetyllysine; alternate. A Glycyl lysine isopeptide (Lys-Gly) (interchain with G-Cter in ubiquitin); alternate cross-link involves residue Lys-614. Phosphoserine is present on Ser-627. Positions 644-674 (DVFYMATEETRKIRKLLSSSETKRAARRPYK) are interaction with RBBP4. Residues 661–703 (SSSETKRAARRPYKPIALRQSQALPLRPPPPAPVNDEPIVIED) are disordered. Residues 684–693 (LPLRPPPPAP) carry the SH3-binding motif. The SUMO interaction motif 1 (SIM); crucial for efficient sumoylation motif lies at 699–703 (IVIED).

This sequence belongs to the metastasis-associated protein family. Component of the nucleosome remodeling and deacetylase (NuRD) repressor complex, composed of core proteins MTA1, MTA2, MTA3, RBBP4, RBBP7, HDAC1, HDAC2, MBD2, MBD3, and peripherally associated proteins CDK2AP1, CDK2AP2, GATAD2A, GATAD2B, CHD3, CHD4 and CHD5. The exact stoichiometry of the NuRD complex is unknown, and some subunits such as MBD2 and MBD3, GATAD2A and GATAD2B, and CHD3, CHD4 and CHD5 define mutually exclusive NuRD complexes. Interacts with RBBP4; the interaction is direct. Interacts with BMAL1. Interacts with CLOCK. Interacts with COP1. Interacts with CSNK1G2 in the cytoplasm. Interacts with EP300. Interacts with HDAC2. Interacts with ITGB3BP/CENPR. Interacts with MBD3L2. Interacts with MDM2. Interacts with NACC2. Interacts with p53/TP53. Interacts with PIAS1. Interacts with PIAS3. Interacts with PIAS4. Interacts with PWWP2A. Interacts with PWWP2B. Interacts with SENP1. Interacts with SENP2. Interacts with SIX3; facilitates the binding of SIX3 to the core DNA motif of SIX3 promoter. Interacts with SUMO1. Interacts with SUMO2. Interacts with TFCP2L1; which is indispensable for TFCP2L1-mediated self-renewal-promoting effect and endoderm-inhibiting action. Interacts with TFAP2C. Interacts with TPR. Interacts with UBE2I/UBC9. Phosphorylation by CSNK1G2/CK1 triggered by estrogen enhances corepression of estrogen receptor (ER). In terms of processing, acetylation is essential for its transcriptional coactivator activity. Post-translationally, sumoylation positively regulates its transcriptional corepressor activity but does not affect the protein stability. Sumoylated preferentially by SUMO2 or SUMO3 than SUMO1. Sumoylation is enhanced by PIAS1/3/4 and preferentially sumoylated by SUMO2 in the presence of PIAS1/3/4. Desumoylated by SENP1. Ubiquitinated by COP1, which leads to proteasomal degradation. As to expression, isoform 1 abundant in testis and expressed at low levels in brain, heart, lung, liver, and kidney. Isoform 2 abundant in adrenal gland, brain, colon, heart, liver, lung, muscle, prostate, stomach, testis, and thymus and expressed at low levels in duodenum, kidney, pancreas, parotid, and spleen.

The protein resides in the nucleus. It localises to the nucleus envelope. The protein localises to the cytoplasm. It is found in the cytoskeleton. Its subcellular location is the rough endoplasmic reticulum. The protein resides in the golgi apparatus. It localises to the zymogen granule. Transcriptional coregulator which can act as both a transcriptional corepressor and coactivator. Acts as a component of the histone deacetylase NuRD complex which participates in the remodeling of chromatin. In the NuRD complex, regulates transcription of its targets by modifying the acetylation status of the target chromatin and cofactor accessibility to the target DNA. In conjunction with other components of NuRD, acts as a transcriptional corepressor of BRCA1, ESR1, TFF1 and CDKN1A. Acts as a transcriptional coactivator of BCAS3, and SUMO2, independent of the NuRD complex. Stimulates the expression of WNT1 by inhibiting the expression of its transcriptional corepressor SIX3. Regulates p53-dependent and -independent DNA repair processes following genotoxic stress. Regulates the stability and function of p53/TP53 by inhibiting its ubiquitination by COP1 and MDM2 thereby regulating the p53-dependent DNA repair. Plays a role in the regulation of the circadian clock and is essential for the generation and maintenance of circadian rhythms under constant light and for normal entrainment of behavior to light-dark (LD) cycles. Positively regulates the CLOCK-BMAL1 heterodimer mediated transcriptional activation of its own transcription and the transcription of CRY1. Regulates deacetylation of BMAL1 by regulating SIRT1 expression, resulting in derepressing CRY1-mediated transcription repression. With TFCP2L1, promotes establishment and maintenance of pluripotency in embryonic stem cells (ESCs) and inhibits endoderm differentiation. This is Metastasis-associated protein MTA1 (Mta1) from Rattus norvegicus (Rat).